The sequence spans 157 residues: MEKVPMTSAGFAALGEELKKRQSEDRPRIIEHIAEARSHGDLSENAEYHAAKEEQSHNEGRIAELEDKLARADIIDISKLSGDTIKFGATVTLVDEDTEKKAVWQIVGEVEADAKKGRISITSPLARALIGKKKGSTVEVNAPGGAKAYEITKVEWR.

Residues 1–60 form a disordered region; that stretch reads MEKVPMTSAGFAALGEELKKRQSEDRPRIIEHIAEARSHGDLSENAEYHAAKEEQSHNEG. Residues 16–60 show a composition bias toward basic and acidic residues; it reads EELKKRQSEDRPRIIEHIAEARSHGDLSENAEYHAAKEEQSHNEG. Positions 46–73 form a coiled coil; sequence AEYHAAKEEQSHNEGRIAELEDKLARAD.

This sequence belongs to the GreA/GreB family.

Functionally, necessary for efficient RNA polymerase transcription elongation past template-encoded arresting sites. The arresting sites in DNA have the property of trapping a certain fraction of elongating RNA polymerases that pass through, resulting in locked ternary complexes. Cleavage of the nascent transcript by cleavage factors such as GreA or GreB allows the resumption of elongation from the new 3'terminus. GreA releases sequences of 2 to 3 nucleotides. The sequence is that of Transcription elongation factor GreA from Bradyrhizobium diazoefficiens (strain JCM 10833 / BCRC 13528 / IAM 13628 / NBRC 14792 / USDA 110).